A 660-amino-acid chain; its full sequence is Baseplate wedge protein gp6 (660 aa).

The protein belongs to the T4likevirus baseplate wedge protein gp6 family. Homodimer; each gp6 molecule in the ring interacts with its two neighbors, forming an N-terminal dimer with one and a C-terminal dimer with the other. Heterotrimer with gp7; gp6 is part of a (gp6)2-gp7 heterotrimeric molecule. The (gp6)2-gp7 heterotrimeric molecule further interacts with gp25 and gp53; the gp25-(gp6)2-gp7 module is involved in sheath contraction. Part of the baseplate macromolecular complex which consists of gp5, gp5.4, gp27 (central spike complex); gp6, gp25, gp53 (inner baseplate); gp7, gp8 (intermediate baseplate); gp9, gp10, gp11, gp12 (peripheral); gp48 and gp54 (proximal region of the tail tube).

The protein resides in the virion. Functionally, baseplate protein that is located next to the tail tube (inner baseplate). Involved in the tail assembly. The gp25-(gp6)2-gp7 module is involved in sheath contraction. In Escherichia coli (Bacteriophage T4), this protein is Baseplate wedge protein gp6 (6).